Here is a 96-residue protein sequence, read N- to C-terminus: Putative septation protein SpoVG (96 aa).

Belongs to the SpoVG family.

Could be involved in septation. This is Putative septation protein SpoVG from Oceanobacillus iheyensis (strain DSM 14371 / CIP 107618 / JCM 11309 / KCTC 3954 / HTE831).